The primary structure comprises 38 residues: Large ribosomal subunit protein bL36 (38 aa).

Belongs to the bacterial ribosomal protein bL36 family.

The chain is Large ribosomal subunit protein bL36 from Flavobacterium johnsoniae (strain ATCC 17061 / DSM 2064 / JCM 8514 / BCRC 14874 / CCUG 350202 / NBRC 14942 / NCIMB 11054 / UW101) (Cytophaga johnsonae).